Consider the following 991-residue polypeptide: Ribonuclease TUDOR 1 (991 aa).

Alanine 2 carries the post-translational modification N-acetylalanine. 4 TNase-like domains span residues 8–151 (QWLK…RWSK), 186–364 (KPME…MWAN), 378–557 (QNFT…IHSA), and 587–714 (RRIP…IWEN). The segment at 227 to 250 (RTTNGSVVETVPDEPNGDVSAESR) is disordered. The Tudor domain maps to 782-847 (NPKRGDIVLA…RPIDPSVSAA (66 aa)). Residue tyrosine 970 is modified to Phosphotyrosine. The segment at 971–991 (GDIESDDEDTGPARKPAGGRR) is disordered. Phosphoserine is present on serine 975. A Phosphothreonine modification is found at threonine 980.

As to expression, expressed in seeds, leaves, flowers, roots and siliques (at protein level). Accumulates in the cap and elongation zone of the root apices (at protein level).

It is found in the cytoplasm. Its subcellular location is the cytoplasmic granule. It localises to the perinuclear region. The protein resides in the endoplasmic reticulum. Its activity is regulated as follows. Repressed by the specific inhibitor 3',5'-deoxythymidine bisphosphate (pdTp); this RNase activity inhibition impairs subcellular relocation upon abiotic stress and leads to reduced stress resistance. Its function is as follows. Cytoprotective ribonuclease (RNase) required for resistance to abiotic stresses, acting as a positive regulator of mRNA decapping during stress. Essential for the integrity and function of cytoplasmic messenger ribonucleoprotein (mRNP) complexes called stress granules (SGs) and processing bodies (PBs), sites of post-transcriptional gene regulation during stress (e.g. salt and heat). Involved in gibberellic acid (GA) biosynthesis. Essential for stress tolerance, probably by regulating mRNAs entering the secretory pathway. Component of stress granules (SGs) that regulates growth under salt stress by modulating levels of GA20OX3 mRNA. Binds GA20OX3 mRNA. May inhibit the degradation of mRNAs involved in stress adaptation. In Arabidopsis thaliana (Mouse-ear cress), this protein is Ribonuclease TUDOR 1.